The sequence spans 253 residues: Tryptophan synthase alpha chain (253 aa).

Residues E45 and D56 each act as proton acceptor in the active site.

The protein belongs to the TrpA family. As to quaternary structure, tetramer of two alpha and two beta chains.

It carries out the reaction (1S,2R)-1-C-(indol-3-yl)glycerol 3-phosphate + L-serine = D-glyceraldehyde 3-phosphate + L-tryptophan + H2O. Its pathway is amino-acid biosynthesis; L-tryptophan biosynthesis; L-tryptophan from chorismate: step 5/5. Its function is as follows. The alpha subunit is responsible for the aldol cleavage of indoleglycerol phosphate to indole and glyceraldehyde 3-phosphate. The sequence is that of Tryptophan synthase alpha chain from Flavobacterium psychrophilum (strain ATCC 49511 / DSM 21280 / CIP 103535 / JIP02/86).